The primary structure comprises 213 residues: Holliday junction resolvase RecU (213 aa).

Residues Thr-99, Asp-101, Glu-114, and Gln-133 each contribute to the Mg(2+) site.

Belongs to the RecU family. The cofactor is Mg(2+).

It localises to the cytoplasm. It carries out the reaction Endonucleolytic cleavage at a junction such as a reciprocal single-stranded crossover between two homologous DNA duplexes (Holliday junction).. In terms of biological role, endonuclease that resolves Holliday junction intermediates in genetic recombination. Cleaves mobile four-strand junctions by introducing symmetrical nicks in paired strands. Promotes annealing of linear ssDNA with homologous dsDNA. Required for DNA repair, homologous recombination and chromosome segregation. The protein is Holliday junction resolvase RecU of Lactococcus lactis subsp. lactis (strain IL1403) (Streptococcus lactis).